The chain runs to 71 residues: Large ribosomal subunit protein bL31 (71 aa).

Cysteine 16, cysteine 18, cysteine 37, and cysteine 40 together coordinate Zn(2+).

The protein belongs to the bacterial ribosomal protein bL31 family. Type A subfamily. In terms of assembly, part of the 50S ribosomal subunit. Zn(2+) serves as cofactor.

Binds the 23S rRNA. This chain is Large ribosomal subunit protein bL31, found in Solidesulfovibrio magneticus (strain ATCC 700980 / DSM 13731 / RS-1) (Desulfovibrio magneticus).